The chain runs to 509 residues: Butyrophilin-like protein 1 (509 aa).

The N-terminal stretch at 1-27 (MMKGSPSVPPAGCLLPLLLLLFTGVSG) is a signal peptide. Ig-like V-type domains follow at residues 28-139 (EVSW…QEVS) and 151-237 (PLVH…KAIL). Residues 28-250 (EVSWFSVKGP…PFFPKTCPWK (223 aa)) are Extracellular-facing. Disulfide bonds link Cys-53/Cys-127 and Cys-167/Cys-221. The helical transmembrane segment at 251 to 271 (VALVCSVLILLVLLGGISLGI) threads the bilayer. The Cytoplasmic segment spans residues 272–509 (WKEHQVKRRE…SMGLSATAQP (238 aa)). A B30.2/SPRY domain is found at 316 to 509 (RKALYKEDWK…SMGLSATAQP (194 aa)). The segment at 349 to 372 (MPDQDKTDSRTEENRGEETVSSSQ) is disordered. Residues 351 to 366 (DQDKTDSRTEENRGEE) show a composition bias toward basic and acidic residues.

The protein belongs to the immunoglobulin superfamily. BTN/MOG family.

The protein resides in the membrane. The chain is Butyrophilin-like protein 1 (Btnl1) from Mus musculus (Mouse).